Reading from the N-terminus, the 803-residue chain is Sensor histidine kinase CheAY (803 aa).

Residue His47 is modified to Phosphohistidine. Disordered regions lie at residues 134-185 (LESA…DEPD) and 209-255 (EADK…ENKA). Basic and acidic residues-rich tracts occupy residues 136–166 (SAKERTTEAPQKENKEETKEEAKEENKENKA), 209–226 (EADKERRAQKKQEAKPKQ), and 233–254 (ETPKAPKTETKAKAKADTEENK). Residues 270 to 517 (RLDHLMNLIG…TQKLKIPLTL (248 aa)) form the Histidine kinase domain. His273 is modified (phosphohistidine; by autocatalysis). Residues 519 to 653 (IIQALLVGVQ…VGAMMDMAKS (135 aa)) form the CheW-like domain. The Response regulatory domain maps to 678-796 (IVLAIDDSST…YLTTVVKRSI (119 aa)). The residue at position 729 (Asp729) is a 4-aspartylphosphate.

Post-translationally, autophosphorylated.

It carries out the reaction ATP + protein L-histidine = ADP + protein N-phospho-L-histidine.. Member of the two-component regulatory system CheAY/CheY that regulates chemotaxis and colonization of the gastric mucosa. Functions as a sensor protein kinase which is autophosphorylated at a histidine residue and transfers its phosphate group to the conserved aspartic acid residue in the regulatory domain of CheY. In turn, phosphorylated CheY (CheY-P) interacts with the flagellar motor protein FliM to cause clockwise flagellar rotation and bacterial reversals, as opposed to straight swimming when CheY is not phosphorylated. The polypeptide is Sensor histidine kinase CheAY (cheAY) (Helicobacter pylori (strain ATCC 700392 / 26695) (Campylobacter pylori)).